A 286-amino-acid polypeptide reads, in one-letter code: Probable aquaporin PIP-type pTOM75 (286 aa).

A disordered region spans residues 1 to 35 (MAENKEEDVKLGANKFRETQPLGTAAQTDKDYKEP). Over 1-55 (MAENKEEDVKLGANKFRETQPLGTAAQTDKDYKEPPPAPLFEPGELSSWSFYRAG) the chain is Cytoplasmic. A compositionally biased stretch (basic and acidic residues) spans 7 to 18 (EDVKLGANKFRE). Residues 56 to 76 (IAEFMATFLFLYITILTVMGL) traverse the membrane as a helical segment. Over 77–89 (KRSDSLCSSVGIQ) the chain is Extracellular. A helical membrane pass occupies residues 90 to 110 (GVAWAFGGMIFALVYCTAGIS). Residues 111 to 133 (GGHINPAVTFGLFLARKLSLTRA) lie on the Cytoplasmic side of the membrane. The NPA 1 signature appears at 115-117 (NPA). Residues 134–154 (VFYMVMQCLGAICGAGVVKGF) traverse the membrane as a helical segment. Over 155–175 (MVGPYQRLGGGANVVNPGYTK) the chain is Extracellular. Residues 176–196 (GDGLGAEIIGTFVLVYTVFSA) form a helical membrane-spanning segment. Residues 197 to 209 (TDAKRNARDSHVP) are Cytoplasmic-facing. Residues 210 to 230 (ILAPLPIGFAVFLVHLATIPI) traverse the membrane as a helical segment. Residues 231 to 257 (TGTGINPARSLGAAIIYNDEHAWNDHW) lie on the Extracellular side of the membrane. The NPA 2 motif lies at 236–238 (NPA). The helical transmembrane segment at 258–278 (IFWVGPMIGAALAAIYHQIII) threads the bilayer. Residues 279-286 (RAMPFHRS) lie on the Cytoplasmic side of the membrane.

The protein belongs to the MIP/aquaporin (TC 1.A.8) family. PIP (TC 1.A.8.11) subfamily. In terms of tissue distribution, roots, ripening fruit and senescing leaves.

It localises to the cell membrane. In terms of biological role, aquaporins facilitate the transport of water and small neutral solutes across cell membranes. The chain is Probable aquaporin PIP-type pTOM75 from Solanum lycopersicum (Tomato).